A 146-amino-acid chain; its full sequence is Small ribosomal subunit protein eS19 (146 aa).

It belongs to the eukaryotic ribosomal protein eS19 family.

This Oryza sativa subsp. japonica (Rice) protein is Small ribosomal subunit protein eS19 (RPS19A).